The chain runs to 329 residues: MAGKLMRAVQYDGYGGGAAGLKHVEVPIPSPGKGEVLIKLEAISLNQLDWKLQNGMVRPFLPRKFPFIPATDVAGEVVRIGQDVKNFKPGDKVVAMLGSFGGGGLAEYGVASEKLTVHRPPEVSAAESSGLPIAGLTAHMALTQHIGLNLDKSGPHKNILITAASGGVGQYAVQLAKLGNTHVTATCGSRNFDLVKSLGADEVIDYKTPEGAALKSPSGKKYDAVIHCASPLPWSVFKPNLSKHGKVIDITPGPRVMLTSAMTKLTCSKKRLVTLLVVIKGEHLSYLVELMREGKLKTVIDSKFSLSKAEEAWAKSIDGHATGKIVVEP.

This sequence belongs to the zinc-containing alcohol dehydrogenase family. Quinone oxidoreductase subfamily.

The protein localises to the plastid. It localises to the chloroplast outer membrane. The enzyme catalyses 2 a quinone + NADPH + H(+) = 2 a 1,4-benzosemiquinone + NADP(+). Its activity is regulated as follows. Inhibited by dicumarol. NADPH-dependent single-electron reducing quinone reductase. Involved in haustorium initiation in parasitic plants through redox cycling of exogenous haustorium-inducing factors. Can use 9,10-phenanthrenequinone (PAQ), 1,2-naphthoquinone, 5-hydroxy-1,4-naphthoquinone (juglone) and 2,6-dimethoxy-p-benzoquinone (DMBQ) as substrates, but has no activity with menadione, diamide, 2,3-dimethoxy-5-methyl-1,4-benzoquinone or 1,4-naphthoquinone. This chain is Quinone-oxidoreductase QR1, chloroplastic, found in Triphysaria versicolor (Yellow owl's clover).